The chain runs to 254 residues: 4-hydroxy-tetrahydrodipicolinate reductase (254 aa).

Residues 8–13, Asp-35, 86–88, and 110–113 contribute to the NAD(+) site; these read GCSGKM, CST, and SANM. His-143 acts as the Proton donor/acceptor in catalysis. Position 144 (His-144) interacts with (S)-2,3,4,5-tetrahydrodipicolinate. Lys-147 (proton donor) is an active-site residue. 153–154 lines the (S)-2,3,4,5-tetrahydrodipicolinate pocket; sequence GT.

It belongs to the DapB family.

The protein localises to the cytoplasm. It catalyses the reaction (S)-2,3,4,5-tetrahydrodipicolinate + NAD(+) + H2O = (2S,4S)-4-hydroxy-2,3,4,5-tetrahydrodipicolinate + NADH + H(+). It carries out the reaction (S)-2,3,4,5-tetrahydrodipicolinate + NADP(+) + H2O = (2S,4S)-4-hydroxy-2,3,4,5-tetrahydrodipicolinate + NADPH + H(+). It functions in the pathway amino-acid biosynthesis; L-lysine biosynthesis via DAP pathway; (S)-tetrahydrodipicolinate from L-aspartate: step 4/4. Functionally, catalyzes the conversion of 4-hydroxy-tetrahydrodipicolinate (HTPA) to tetrahydrodipicolinate. The chain is 4-hydroxy-tetrahydrodipicolinate reductase from Clostridium perfringens (strain 13 / Type A).